The chain runs to 430 residues: CinA-like protein (430 aa).

It belongs to the CinA family.

The sequence is that of CinA-like protein from Prochlorococcus marinus (strain NATL2A).